Consider the following 138-residue polypeptide: Putative nickel-responsive regulator (138 aa).

Ni(2+) is bound by residues H76, H87, H89, and C95.

Belongs to the transcriptional regulatory CopG/NikR family. It depends on Ni(2+) as a cofactor.

Its function is as follows. Transcriptional regulator. The protein is Putative nickel-responsive regulator of Pseudomonas putida (strain W619).